The sequence spans 715 residues: ATP-binding cassette sub-family B member 10, mitochondrial (715 aa).

The transit peptide at 1-82 (MRAPSARALL…SSGARRCWVL (82 aa)) directs the protein to the mitochondrion. Over 83–133 (AGPRAAHPLFARLQGAAATGVRDLGNDSQRRPAATGRSEVWKLLGLVRPER) the chain is Mitochondrial matrix. The helical transmembrane segment at 134 to 157 (GRLSAAVGFLAVSSVITMSAPFFL) threads the bilayer. Residues 136 to 422 (LSAAVGFLAV…LSSFYSELMK (287 aa)) enclose the ABC transmembrane type-1 domain. The Mitochondrial intermembrane portion of the chain corresponds to 158–178 (GRIIDVIYTNPSEGYGDSLTR). Residues 179 to 201 (LCAVLTCVFLCGAAANGIRVYLM) form a helical membrane-spanning segment. The Mitochondrial matrix portion of the chain corresponds to 202–252 (QSSGQSIVNRLRTSLFSSILRQEVAFFDKTRTGELINRLSSDTALLGRSVT). Lys-230 carries the N6-acetyllysine modification. A helical transmembrane segment spans residues 253–275 (ENLSDGLRAGAQASVGVGMMFFV). The Mitochondrial intermembrane portion of the chain corresponds to 276 to 278 (SPS). A helical transmembrane segment spans residues 279 to 298 (LATFVLSVVPPISVLAVIYG). Over 299 to 357 (RYLRKLSKATQDSLAEATQLAEERIGNIRTIRAFGKEMTEVEKYTGRVDQLLQLAQKEA) the chain is Mitochondrial matrix. The chain crosses the membrane as a helical span at residues 358–381 (LARAGFFGAAGLSGNLIVLSVLYK). The Mitochondrial intermembrane segment spans residues 382–395 (GGLLMGSAHMTVGE). The chain crosses the membrane as a helical span at residues 396–417 (LSSFLMYAFWVGLSIGGLSSFY). At 418–715 (SELMKGLGAG…AEQFLEPARA (298 aa)) the chain is on the mitochondrial matrix side. Positions 457–696 (LEFRNVHFTY…PNGLYRKLMN (240 aa)) constitute an ABC transporter domain. Positions 495, 497, 498, 499, and 500 each coordinate ATP. Position 499 (Ser-499) interacts with Mg(2+). S-glutathionyl cysteine is present on Cys-547. Asp-623 provides a ligand contact to Mg(2+).

This sequence belongs to the ABC transporter superfamily. ABCB family. Mitochondrial peptide exporter (TC 3.A.1.212) subfamily. Homodimer or homooligomer. Interacts with PAAT; this interaction regulates ABCB10. Interacts with SLC25A37; this interaction stabilizes SLC25A37 and enhances the function of SLC25A37 to import mitochondrial iron during erythroid differentiation. Interacts with FECH; this interaction may allow the formation of the oligomeric complex with SLC25A37. Forms a complex with ABCB7 and FECH, where a dimeric FECH bridges ABCB7 and ABCB10 homodimers; this complex may be required for cellular iron homeostasis, mitochondrial function and heme biosynthesis. As to expression, expressed at particularly high levels in fetal liver, and erythroid tissues of embryos and adults. Found also in adult bone marrow, liver and kidney, and at lower levels in heart, brain and spleen.

It is found in the mitochondrion inner membrane. It carries out the reaction biliverdin IXalpha(in) + ATP + H2O = biliverdin IXalpha(out) + ADP + phosphate + H(+). With respect to regulation, oxidized glutathione (GSSG) stimulates ATP hydrolysis without affecting ATP binding, whereas reduced glutathione (GSH) inhibits ATP binding and hydrolysis. ATP-dependent transporter located in the mitochondrial inner membrane that catalyzes the export of biliverdin from the mitochondrial matrix, and plays a crucial role in hemoglobin synthesis and antioxidative stress. Participates in the early step of the heme biosynthetic process during insertion of iron into protoporphyrin IX (PPIX). Involved in the stabilization of the iron transporter mitoferrin-1/SLC25A37. In addition may be involved in mitochondrial unfolded protein response (UPRmt) signaling pathway, although ABCB10 probably does not participate in peptide export from mitochondria. The polypeptide is ATP-binding cassette sub-family B member 10, mitochondrial (Mus musculus (Mouse)).